The following is a 349-amino-acid chain: Isopentenyl-diphosphate delta-isomerase (349 aa).

6–7 (RK) provides a ligand contact to substrate. Residues 62–64 (AMT), serine 93, and asparagine 122 contribute to the FMN site. Glutamine 152 lines the substrate pocket. Glutamate 153 is a Mg(2+) binding site. Residues lysine 184, threonine 214, 258-259 (GG), and 280-281 (AG) contribute to the FMN site.

It belongs to the IPP isomerase type 2 family. Homooctamer. Dimer of tetramers. It depends on FMN as a cofactor. NADPH serves as cofactor. Requires Mg(2+) as cofactor.

It localises to the cytoplasm. It carries out the reaction isopentenyl diphosphate = dimethylallyl diphosphate. Its function is as follows. Involved in the biosynthesis of isoprenoids. Catalyzes the 1,3-allylic rearrangement of the homoallylic substrate isopentenyl (IPP) to its allylic isomer, dimethylallyl diphosphate (DMAPP). This chain is Isopentenyl-diphosphate delta-isomerase, found in Bacillus licheniformis (strain ATCC 14580 / DSM 13 / JCM 2505 / CCUG 7422 / NBRC 12200 / NCIMB 9375 / NCTC 10341 / NRRL NRS-1264 / Gibson 46).